The chain runs to 494 residues: Ribose import ATP-binding protein RbsA (494 aa).

ABC transporter domains are found at residues 3-240 (IEMK…VGRS) and 250-494 (SQIS…TGGE). Residue 35 to 42 (GENGAGKS) participates in ATP binding.

The protein belongs to the ABC transporter superfamily. Ribose importer (TC 3.A.1.2.1) family. In terms of assembly, the complex is composed of an ATP-binding protein (RbsA), two transmembrane proteins (RbsC) and a solute-binding protein (RbsB).

It localises to the cell membrane. It carries out the reaction D-ribose(out) + ATP + H2O = D-ribose(in) + ADP + phosphate + H(+). Part of the ABC transporter complex RbsABC involved in ribose import. Responsible for energy coupling to the transport system. The polypeptide is Ribose import ATP-binding protein RbsA (Bacillus cereus (strain ZK / E33L)).